The sequence spans 431 residues: Serine--tRNA ligase (431 aa).

An L-serine-binding site is contributed by 238–240 (TAE). 269 to 271 (RSE) is an ATP binding site. Residue Glu292 participates in L-serine binding. 356 to 359 (EISS) is a binding site for ATP. Ser392 is a binding site for L-serine.

Belongs to the class-II aminoacyl-tRNA synthetase family. Type-1 seryl-tRNA synthetase subfamily. As to quaternary structure, homodimer. The tRNA molecule binds across the dimer.

The protein resides in the cytoplasm. It carries out the reaction tRNA(Ser) + L-serine + ATP = L-seryl-tRNA(Ser) + AMP + diphosphate + H(+). The enzyme catalyses tRNA(Sec) + L-serine + ATP = L-seryl-tRNA(Sec) + AMP + diphosphate + H(+). Its pathway is aminoacyl-tRNA biosynthesis; selenocysteinyl-tRNA(Sec) biosynthesis; L-seryl-tRNA(Sec) from L-serine and tRNA(Sec): step 1/1. Catalyzes the attachment of serine to tRNA(Ser). Is also able to aminoacylate tRNA(Sec) with serine, to form the misacylated tRNA L-seryl-tRNA(Sec), which will be further converted into selenocysteinyl-tRNA(Sec). The chain is Serine--tRNA ligase from Pectobacterium atrosepticum (strain SCRI 1043 / ATCC BAA-672) (Erwinia carotovora subsp. atroseptica).